A 360-amino-acid chain; its full sequence is Mitogen-activated protein kinase 1 (360 aa).

N-acetylalanine is present on Ala-2. The region spanning Tyr-25–Leu-313 is the Protein kinase domain. Ser-29 carries the phosphoserine; by SGK1 modification. Residues Ile-31–Val-39 and Lys-54 contribute to the ATP site. Asp-149 serves as the catalytic Proton acceptor. Thr-185 bears the Phosphothreonine; by MAP2K1 and MAP2K2 mark. The TXY motif lies at Thr-185–Tyr-187. The residue at position 187 (Tyr-187) is a Phosphotyrosine; by MAP2K1 and MAP2K2. Phosphothreonine; by autocatalysis is present on Thr-190. Phosphoserine occurs at positions 246 and 248. A DNA-binding region spans residues Lys-259–Arg-277. The residue at position 284 (Ser-284) is a Phosphoserine. A Cytoplasmic retention motif motif is present at residues Asp-318–Glu-322. Positions Ala-327 to Met-333 match the Nuclear translocation motif motif.

This sequence belongs to the protein kinase superfamily. CMGC Ser/Thr protein kinase family. MAP kinase subfamily. In terms of assembly, binds both upstream activators and downstream substrates in multimolecular complexes. This interaction inhibits its tyrosine-kinase activity. Interacts with ADAM15, ARHGEF2, ARRB2, DAPK1 (via death domain), HSF4, IER3, IPO7, NISCH, SGK1, and isoform 1 of NEK2. Interacts (via phosphorylated form) with TPR (via C-terminal region and phosphorylated form); the interaction requires dimerization of MAPK1/ERK2 and increases following EGF stimulation. Interacts with MAP2K1. Interacts with DUSP6. Interacts (phosphorylated form) with CAV2 ('Tyr-19'-phosphorylated form); the interaction, promoted by insulin, leads to nuclear location and MAPK1 activation. Interacts with MORG1, PEA15 and MKNK2. MKNK2 isoform 1 binding prevents from dephosphorylation and inactivation. Interacts with DCC. The phosphorylated form interacts with PML (isoform PML-4). Interacts with STYX. Interacts with CDK2AP2. Interacts with CAVIN4. Interacts with DUSP7; the interaction enhances DUSP7 phosphatase activity. Interacts with GIT1; this interaction is necessary for MAPK1 localization to focal adhesions. Interacts with ZNF263. Interacts with phosphoglycerate kinase PGK1; the interaction is direct, occurs under hypoxic conditions, and promotes interaction between PGK1 and PIN1. As to quaternary structure, (Microbial infection) Interacts with HIV-1 Nef through its SH3 domain. Mg(2+) serves as cofactor. Phosphorylated upon KIT and FLT3 signaling. Dually phosphorylated on Thr-185 and Tyr-187, which activates the enzyme. Undergoes regulatory phosphorylation on additional residues such as Ser-246 and Ser-248 in the kinase insert domain (KID) These phosphorylations, which are probably mediated by more than one kinase, are important for binding of MAPK1/ERK2 to importin-7 (IPO7) and its nuclear translocation. In addition, autophosphorylation of Thr-190 was shown to affect the subcellular localization of MAPK1/ERK2 as well. Ligand-activated ALK induces tyrosine phosphorylation. Dephosphorylated by PTPRJ at Tyr-187. Phosphorylation on Ser-29 by SGK1 results in its activation by enhancing its interaction with MAP2K1/MEK1 and MAP2K2/MEK2. DUSP3 and DUSP6 dephosphorylate specifically MAPK1/ERK2 and MAPK3/ERK1 whereas DUSP9 dephosphorylates a broader range of MAPKs. Dephosphorylated by DUSP1 and DUSP2 at Thr-185 and Tyr-187. Post-translationally, ISGylated. In terms of processing, ubiquitinated by TRIM15 via 'Lys-63'-linked ubiquitination; leading to activation. Deubiquitinated by CYLD.

The protein localises to the cytoplasm. It is found in the cytoskeleton. It localises to the spindle. The protein resides in the nucleus. Its subcellular location is the microtubule organizing center. The protein localises to the centrosome. It is found in the membrane. It localises to the caveola. The protein resides in the cell junction. Its subcellular location is the focal adhesion. It carries out the reaction L-seryl-[protein] + ATP = O-phospho-L-seryl-[protein] + ADP + H(+). The catalysed reaction is L-threonyl-[protein] + ATP = O-phospho-L-threonyl-[protein] + ADP + H(+). Its activity is regulated as follows. Phosphorylated by MAP2K1/MEK1 and MAP2K2/MEK2 on Thr-185 and Tyr-187 in response to external stimuli like insulin or NGF. Both phosphorylations are required for activity. This phosphorylation causes dramatic conformational changes, which enable full activation and interaction of MAPK1/ERK2 with its substrates. Phosphorylation on Ser-29 by SGK1 results in its activation by enhancing its interaction with MAP2K1/MEK1 and MAP2K2/MEK2. Dephosphorylated and inactivated by DUSP1, DUSP3, DUSP6 and DUSP9. Inactivated by pyrimidylpyrrole inhibitors. Functionally, serine/threonine kinase which acts as an essential component of the MAP kinase signal transduction pathway. MAPK1/ERK2 and MAPK3/ERK1 are the 2 MAPKs which play an important role in the MAPK/ERK cascade. They participate also in a signaling cascade initiated by activated KIT and KITLG/SCF. Depending on the cellular context, the MAPK/ERK cascade mediates diverse biological functions such as cell growth, adhesion, survival and differentiation through the regulation of transcription, translation, cytoskeletal rearrangements. The MAPK/ERK cascade also plays a role in initiation and regulation of meiosis, mitosis, and postmitotic functions in differentiated cells by phosphorylating a number of transcription factors. About 160 substrates have already been discovered for ERKs. Many of these substrates are localized in the nucleus, and seem to participate in the regulation of transcription upon stimulation. However, other substrates are found in the cytosol as well as in other cellular organelles, and those are responsible for processes such as translation, mitosis and apoptosis. Moreover, the MAPK/ERK cascade is also involved in the regulation of the endosomal dynamics, including lysosome processing and endosome cycling through the perinuclear recycling compartment (PNRC); as well as in the fragmentation of the Golgi apparatus during mitosis. The substrates include transcription factors (such as ATF2, BCL6, ELK1, ERF, FOS, HSF4 or SPZ1), cytoskeletal elements (such as CANX, CTTN, GJA1, MAP2, MAPT, PXN, SORBS3 or STMN1), regulators of apoptosis (such as BAD, BTG2, CASP9, DAPK1, IER3, MCL1 or PPARG), regulators of translation (such as EIF4EBP1 and FXR1) and a variety of other signaling-related molecules (like ARHGEF2, DCC, FRS2 or GRB10). Protein kinases (such as RAF1, RPS6KA1/RSK1, RPS6KA3/RSK2, RPS6KA2/RSK3, RPS6KA6/RSK4, SYK, MKNK1/MNK1, MKNK2/MNK2, RPS6KA5/MSK1, RPS6KA4/MSK2, MAPKAPK3 or MAPKAPK5) and phosphatases (such as DUSP1, DUSP4, DUSP6 or DUSP16) are other substrates which enable the propagation the MAPK/ERK signal to additional cytosolic and nuclear targets, thereby extending the specificity of the cascade. Mediates phosphorylation of TPR in response to EGF stimulation. May play a role in the spindle assembly checkpoint. Phosphorylates PML and promotes its interaction with PIN1, leading to PML degradation. Phosphorylates CDK2AP2. Phosphorylates phosphoglycerate kinase PGK1 under hypoxic conditions to promote its targeting to the mitochondrion and suppress the formation of acetyl-coenzyme A from pyruvate. Acts as a transcriptional repressor. Binds to a [GC]AAA[GC] consensus sequence. Repress the expression of interferon gamma-induced genes. Seems to bind to the promoter of CCL5, DMP1, IFIH1, IFITM1, IRF7, IRF9, LAMP3, OAS1, OAS2, OAS3 and STAT1. Transcriptional activity is independent of kinase activity. This is Mitogen-activated protein kinase 1 from Homo sapiens (Human).